The sequence spans 602 residues: MAEGTDPLDDCGGFLDTEADCLDCDNLEEDLTELFDADTVSSLLDDTDQVQGNSLEPFQHHEATETLKSIEHLKRKYVDSPDKSLGIDNSVNALSPRLQAFSLSGQKKAVKKRLFGTDGDEAASGAESLQVESGFGSQQSVSDTPVTDILNANTARVKHLLLFRQAHSVSFSELTRTFQSDKTMSWDWVGGLADIHVSVLESLQTSLRSHCVYVQYDLNFAETNASSLLLLLRFKAQKCRDGVKALLSQLLGVQDLKVLLEPPKTRSVAVALFWYKRAMVSGVFSYGPMPEWITQQTNVNHQMLQEKPFQLSVMVQWAYDNHLQDESSIAYKYAMLAETDENARAFLASNSQAKYVRDCCNMVRLYLRAEMRQMTMSAWINYRLDGMNDDGDWKVVVHFLRHQRVEFIPFMVKLKAFLRGTPKKNCMVFYGPPNSGKSYFCMSLIRLLAGRVLSFANSRSHFWLQPLADAKLALVDDATSACWDFIDTYLRNALDGNPISVDLKHKAPIEIKCPPLLITTNVDVKSDDRWRYLFSRICVFNFLQELPIRNGTPVYELNDANWKSFFKRFWSTLELSDPEDEGDDGGSQPALRLHTGGTSQSL.

A Nuclear localization signal motif is present at residues 74-76 (KRK). 3 positions are modified to phosphoserine; by host: S80, S84, and S95. The interval 138–306 (QQSVSDTPVT…TNVNHQMLQE (169 aa)) is DNA-binding region. The SF3 helicase domain occupies 405-555 (VEFIPFMVKL…LPIRNGTPVY (151 aa)). Position 431–438 (431–438 (GPPNSGKS)) interacts with ATP. Residue K512 forms a Glycyl lysine isopeptide (Lys-Gly) (interchain with G-Cter in SUMO) linkage. The interval 577–602 (DPEDEGDDGGSQPALRLHTGGTSQSL) is disordered.

Belongs to the papillomaviridae E1 protein family. As to quaternary structure, can form hexamers. Interacts with E2 protein; this interaction increases E1 DNA binding specificity. Interacts with host DNA polymerase subunit POLA2. Interacts with host single stranded DNA-binding protein RPA1. Interacts with host TOP1; this interaction stimulates the enzymatic activity of TOP1. Post-translationally, phosphorylated. In terms of processing, sumoylated.

It localises to the host nucleus. It carries out the reaction Couples ATP hydrolysis with the unwinding of duplex DNA by translocating in the 3'-5' direction.. The catalysed reaction is ATP + H2O = ADP + phosphate + H(+). ATP-dependent DNA 3'-5' helicase required for initiation of viral DNA replication. It forms a complex with the viral E2 protein. The E1-E2 complex binds to the replication origin which contains binding sites for both proteins. During the initial step, a dimer of E1 interacts with a dimer of protein E2 leading to a complex that binds the viral origin of replication with high specificity. Then, a second dimer of E1 displaces the E2 dimer in an ATP-dependent manner to form the E1 tetramer. Following this, two E1 monomers are added to each half of the site, which results in the formation of two E1 trimers on the viral ori. Subsequently, two hexamers will be created. The double hexamer acts as a bi-directional helicase machinery and unwinds the viral DNA and then recruits the host DNA polymerase to start replication. The protein is Replication protein E1 of Sylvilagus floridanus (Cottontail rabbit).